Here is a 328-residue protein sequence, read N- to C-terminus: Cytochrome c biogenesis protein CcsA (328 aa).

The next 8 membrane-spanning stretches (helical) occupy residues 13 to 33, 46 to 66, 73 to 93, 101 to 121, 146 to 166, 234 to 254, 263 to 283, and 295 to 315; these read ISFS…LVNL, GIVI…IYSG, LYES…VSYF, LNAI…SGLL, MILG…LLVI, IISL…VWAN, WDPK…YLHI, and AIVA…VNLL.

Belongs to the CcmF/CycK/Ccl1/NrfE/CcsA family. May interact with Ccs1.

The protein resides in the plastid. The protein localises to the chloroplast thylakoid membrane. Its function is as follows. Required during biogenesis of c-type cytochromes (cytochrome c6 and cytochrome f) at the step of heme attachment. In Nasturtium officinale (Watercress), this protein is Cytochrome c biogenesis protein CcsA.